The following is a 107-amino-acid chain: Essential MCU regulator, mitochondrial (107 aa).

Residues 1–47 constitute a mitochondrion transit peptide; it reads MASTAARRLAWVAVRPGALWSGPRGRRGGDVYTVPGSSGLSQVPSRS. At 48-65 the chain is on the mitochondrial matrix side; sequence VIVTRSGAILPKPVKMSF. Residues 66–85 traverse the membrane as a helical segment; it reads GLLRVFSIVIPFLYVGTLIS. The GXXXX[G/A/S] signature appears at 81 to 85; it reads GTLIS. Topologically, residues 86–107 are mitochondrial intermembrane; the sequence is KNFAALLEEHDIFVPEDDDDDD.

It belongs to the SMDT1/EMRE family. As to quaternary structure, component of the uniplex complex, composed of MCU, EMRE/SMDT1, MICU1 and MICU2 (or MICU3) in a 4:4:1:1 stoichiometry. The number of EMRE/SMDT1 molecules is hovewer variable, ranging from 1 to 4 copies per uniplex complex, leading to uniplex complexes with distinct gatekeeping profiles. Interacts (via its C-terminal poly-Asp tail) with MCUR1; the interaction is direct. Unprocessed form interacts (via transit peptide) with MAIP1. In terms of processing, undergoes proteolytic degradation in neurons: degraded by AFG3L2 and SPG7 before SMDT1/EMRE assembly with the uniporter complex, limiting the availability of SMDT1/EMRE for MCU assembly and promoting efficient assembly of gatekeeper subunits with MCU. As to expression, widely expressed.

The protein resides in the mitochondrion inner membrane. In terms of biological role, essential regulatory subunit of the mitochondrial calcium uniporter complex (uniplex), a complex that mediates calcium uptake into mitochondria. Required to bridge the calcium-sensing proteins MICU1 with the calcium-conducting subunit MCU. Acts by mediating activation of MCU and retention of MICU1 to the MCU pore, in order to ensure tight regulation of the uniplex complex and appropriate responses to intracellular calcium signaling. The protein is Essential MCU regulator, mitochondrial of Mus musculus (Mouse).